Here is a 56-residue protein sequence, read N- to C-terminus: Large ribosomal subunit protein bL32 (56 aa).

Residues 1–34 (MAVQQNKKSRSKRGMRRSHDSLSTAQLSVDATSG) form a disordered region. The span at 7–16 (KKSRSKRGMR) shows a compositional bias: basic residues. Residues 21-31 (SLSTAQLSVDA) are compositionally biased toward polar residues.

This sequence belongs to the bacterial ribosomal protein bL32 family.

This is Large ribosomal subunit protein bL32 from Shewanella frigidimarina (strain NCIMB 400).